Reading from the N-terminus, the 1423-residue chain is Interphotoreceptor matrix proteoglycan 2 (1423 aa).

The signal sequence occupies residues 1-27 (MFAFLWKISLCLLVLGVITGDPQAVAA). The Extracellular segment spans residues 28–1289 (EEKQAKDASP…EYVSEPLVVG (1262 aa)). N150 carries N-linked (GlcNAc...) asparagine glycosylation. Positions 245–358 (TEQMIEFSIV…NPTVVYTISD (114 aa)) constitute an SEA 1 domain. The hyaluronan-binding motif involved in chondroitin sulfate A-binding stretch occupies residues 265–273 (SDPDTAKYQ). Residues N325 and N375 are each glycosylated (N-linked (GlcNAc...) asparagine). Disordered stretches follow at residues 423–469 (AERP…DSEV), 522–559 (DSSD…DYTA), and 577–602 (TKRT…ADSL). A compositionally biased stretch (acidic residues) spans 523–532 (SSDEFEDTGL). The span at 537–546 (LLPSSPSSHL) shows a compositional bias: low complexity. Positions 577 to 587 (TKRTVTAEKEV) are enriched in basic and acidic residues. N676 carries an N-linked (GlcNAc...) asparagine glycan. A disordered region spans residues 886–907 (FEVSTDTSTEEQQSLDSSLADR). Positions 889–902 (STDTSTEEQQSLDS) are enriched in polar residues. Positions 1083-1196 (RALVVFFSLR…YSLDVESGEQ (114 aa)) constitute an SEA 2 domain. N-linked (GlcNAc...) asparagine glycans are attached at residues N1128, N1142, and N1160. 2 EGF-like domains span residues 1196–1234 (QADP…IDGL) and 1237–1279 (NSIC…EHCE). Intrachain disulfides connect C1200–C1211, C1205–C1222, C1240–C1253, C1247–C1263, and C1265–C1278. The tract at residues 1266-1274 (RVGENWWYR) is hyaluronan-binding motif involved in chondroitin sulfate C-binding. The helical transmembrane segment at 1290–1310 (IAIASVAGFLLVASAVIFFLA) threads the bilayer. At 1311 to 1423 (RTLRDQYTKS…FVRQHQMKLL (113 aa)) the chain is on the cytoplasmic side. Residues 1322–1327 (TEDSQG) form a hyaluronan-binding motif involved in chondroitin sulfate C-binding region.

Highly glycosylated (N- and O-linked carbohydrates). In terms of tissue distribution, expressed in retina.

It localises to the photoreceptor outer segment membrane. The protein resides in the photoreceptor inner segment membrane. Its subcellular location is the secreted. The protein localises to the extracellular space. It is found in the extracellular matrix. It localises to the interphotoreceptor matrix. Chondroitin sulfate- and hyaluronan-binding proteoglycan involved in the organization of interphotoreceptor matrix. This Gallus gallus (Chicken) protein is Interphotoreceptor matrix proteoglycan 2 (IMPG2).